The primary structure comprises 3313 residues: Cadherin EGF LAG seven-pass G-type receptor 3 (3313 aa).

An N-terminal signal peptide occupies residues 1 to 31 (MARRPLWWGLPGPSTPLLLLLLFSLFPSSRE). The Extracellular segment spans residues 32–2538 (EMGGGGDQGW…RLEGDLELLA (2507 aa)). Disordered stretches follow at residues 148–187 (LPLD…RNGR) and 205–269 (EPGH…RMRS). Positions 258 to 268 (HESRTAPERMR) are enriched in basic and acidic residues. Cadherin domains are found at residues 317–424 (PQYN…APVF), 425–536 (EQAQ…APQF), 537–642 (SEKR…SPIF), 643–747 (VSTP…RPEF), 748–849 (TMKE…RPVF), 850–952 (QSAH…APQF), 953–1058 (VASH…APVF), 1059–1160 (PAEE…SPVL), and 1161–1257 (NNFQ…VVII). N623 is a glycosylation site (N-linked (GlcNAc...) asparagine). A glycan (N-linked (GlcNAc...) asparagine) is linked at N838. N1173, N1213, N1308, and N1318 each carry an N-linked (GlcNAc...) asparagine glycan. Residues 1366–1424 (DDNVCLREPCENYMKCVSVLRFDSSAPFLASASTLFRPIQPIAGLRCRCPPGFTGDFCE) form the EGF-like 1; calcium-binding domain. Intrachain disulfides connect C1370/C1381, C1375/C1412, C1414/C1423, C1430/C1441, C1435/C1450, C1452/C1461, C1470/C1481, C1475/C1491, and C1493/C1504. An EGF-like 2; calcium-binding domain is found at 1426–1462 (ELDLCYSNPCRNGGACARREGGYTCVCRPRFTGEDCE). One can recognise an EGF-like 3; calcium-binding domain in the interval 1466–1505 (EAGRCVPGVCRNGGTCTNAPNGGFRCQCPAGGAFEGPRCE). A Laminin G-like 1 domain is found at 1506 to 1710 (VAARSFPPSS…VANNGTTAGC (205 aa)). N-linked (GlcNAc...) asparagine glycosylation is found at N1640 and N1704. Disulfide bonds link C1684–C1710, C1717–C1728, C1722–C1737, and C1739–C1748. In terms of domain architecture, EGF-like 4; calcium-binding spans 1713–1749 (KSHFCASGPCKNGGLCSERWGGFSCDCPVGFGGKDCR). A Laminin G-like 2 domain is found at 1753-1935 (AHPYHFQGNG…SHRINVEPGC (183 aa)). Residue N1761 is glycosylated (N-linked (GlcNAc...) asparagine). 9 disulfides stabilise this stretch: C1906–C1935, C1941–C1952, C1946–C1961, C1963–C1972, C1976–C1987, C1981–C1999, C2001–C2010, C2018–C2031, and C2033–C2043. One can recognise an EGF-like 5; calcium-binding domain in the interval 1937-1972 (VTNPCASGPCPPHANCKDLWQTFSCTCWPGYYGPGC). D1954 is modified ((3R)-3-hydroxyaspartate). Residues 1973-2011 (VDACLLNPCQNQGSCRHLQGGPHGYTCDCASGYFGQHCE) form the EGF-like 6; calcium-binding domain. In terms of domain architecture, EGF-like 7; calcium-binding spans 2012–2044 (HRMDQQCPRGWWGSPTCGPCNCDVHKGFDPNCN). N-linked (GlcNAc...) asparagine glycosylation is present at N2044. The EGF-like 8; calcium-binding domain maps to 2046-2081 (TSGQCHCKEFHYRPRGSDSCLPCDCYPVGSTSRSCA). 5 disulfide bridges follow: C2050/C2065, C2052/C2068, C2070/C2080, C2089/C2098, and C2101/C2113. The Laminin EGF-like domain maps to 2068–2115 (CDCYPVGSTSRSCAPHSGQCPCRPGALGRQCNSCDSPFAEVTASGCRV). The residue at position 2117 (Y2117) is a Phosphotyrosine. N2173, N2192, N2382, N2472, and N2504 each carry an N-linked (GlcNAc...) asparagine glycan. Residues 2356–2395 (HTHVLLPSQSPQPSPSEVLPTSSNAENATASGVVSPPAPL) form a disordered region. The region spanning 2364–2528 (QSPQPSPSEV…GVLMDASPRE (165 aa)) is the GAIN-B domain. Positions 2374 to 2387 (LPTSSNAENATASG) are enriched in polar residues. Intrachain disulfides connect C2478-C2510 and C2498-C2512. The interval 2478-2528 (CVQWDPPGPADQHGMWTARDCELVHRNGSHARCRCSRTGTFGVLMDASPRE) is GPS. Residues 2539–2559 (VFTHVVVAASVTALVLTAAVL) form a helical membrane-spanning segment. The Cytoplasmic segment spans residues 2560-2570 (LSLRSLKSNVR). Residues 2571-2591 (GIHANVAAALGVAELLFLLGI) traverse the membrane as a helical segment. Residues 2592-2599 (HRTHNQLL) lie on the Extracellular side of the membrane. The helical transmembrane segment at 2600–2620 (CTVVAILLHYFFLSTFAWLLV) threads the bilayer. Over 2621-2641 (QGLHLYRMQVEPRNVDRGAMR) the chain is Cytoplasmic. Residues 2642–2662 (FYHALGWGVPAVLLGLAVGLD) traverse the membrane as a helical segment. The Extracellular segment spans residues 2663 to 2679 (PEGYGNPDFCWISIHEP). Residues 2680-2700 (LIWSFAGPIVLVIVMNGIMFL) traverse the membrane as a helical segment. At 2701–2724 (LAARTSCSTGQREAKKTSVLRTLR) the chain is on the cytoplasmic side. Residues 2725 to 2745 (SSFLLLLLVSASWLFGLLAVN) form a helical membrane-spanning segment. Residues 2746 to 2752 (HSVLAFH) are Extracellular-facing. The helical transmembrane segment at 2753-2773 (YLHAGLCGLQGLAVLLLFCVL) threads the bilayer. The Cytoplasmic portion of the chain corresponds to 2774-3313 (NADARAAWTP…SEVPRSEGHS (540 aa)). Disordered stretches follow at residues 2887-2927 (AGAD…RPLR) and 2977-3004 (SNKD…RAQR). The span at 2889–2899 (ADSDSDSDLSL) shows a compositional bias: acidic residues. Over residues 2918–2927 (TRGRFQRPLR) the composition is skewed to basic residues. Position 3050 is a phosphotyrosine (Y3050). Disordered regions lie at residues 3091–3242 (APVL…PSTE) and 3255–3313 (NSSA…EGHS). S3098 is subject to Phosphoserine. Basic and acidic residues predominate over residues 3102–3119 (SQERLDTAPARLEPRDRG). Low complexity-rich tracts occupy residues 3178 to 3197 (QRPL…SLSR) and 3255 to 3289 (NSSA…PSTP). Residues 3290 to 3301 (RSATSHSISELS) are compositionally biased toward polar residues.

Belongs to the G-protein coupled receptor 2 family. LN-TM7 subfamily. In terms of processing, the iron and 2-oxoglutarate dependent 3-hydroxylation of aspartate and asparagine is (R) stereospecific within EGF domains. As to expression, expressed in the brain. Expressed in cerebellum, olfactory bulb, cerebral cortex, hippocampus and brain stem.

The protein localises to the cell membrane. Its function is as follows. Receptor that may have an important role in cell/cell signaling during nervous system formation. The chain is Cadherin EGF LAG seven-pass G-type receptor 3 (Celsr3) from Rattus norvegicus (Rat).